Consider the following 932-residue polypeptide: Protocadherin gamma-A2 (932 aa).

Residues 1-28 (MAALQKLPHCRKLFLLCFLLATLWEARA) form the signal peptide. Cadherin domains are found at residues 29 to 133 (GQIR…APRF), 134 to 242 (GVEE…APVF), 243 to 347 (TQPE…APEF), 348 to 452 (YMTS…APAF), 453 to 562 (SRTS…PPEI), and 570 to 682 (DGST…EPSA). At 29–692 (GQIRYSVREE…KPNDSDLTLY (664 aa)) the chain is on the extracellular side. 2 N-linked (GlcNAc...) asparagine glycosylation sites follow: Asn-419 and Asn-545. N-linked (GlcNAc...) asparagine glycosylation is present at Asn-685. Residues 693-713 (LVVAVAAVSCVFLAFVIVLLA) traverse the membrane as a helical segment. Topologically, residues 714 to 932 (HRLRRWHKSR…KKKSGKKEKK (219 aa)) are cytoplasmic. Disordered regions lie at residues 798-841 (LEEE…WPNN) and 902-932 (ATLT…KEKK). The segment covering 806–841 (FSQQAPPNTDWRFSQAQRPGTSGSQNGDDTGTWPNN) has biased composition (polar residues). The segment covering 922 to 932 (NKKKSGKKEKK) has biased composition (basic residues).

The protein resides in the cell membrane. Potential calcium-dependent cell-adhesion protein. May be involved in the establishment and maintenance of specific neuronal connections in the brain. This is Protocadherin gamma-A2 (PCDHGA2) from Pan troglodytes (Chimpanzee).